We begin with the raw amino-acid sequence, 445 residues long: GTPase Der (445 aa).

EngA-type G domains lie at 2 to 166 (FRVA…PEYE) and 182 to 355 (IKVA…NQAW). Residues 8 to 15 (GIPNVGKS), 55 to 59 (DTGGY), 118 to 121 (NKID), 188 to 195 (GKPNAGKS), 235 to 239 (DTAGM), and 300 to 303 (NKID) contribute to the GTP site. One can recognise a KH-like domain in the interval 356-440 (KRVGTGQLNR…PIKLIFRGKE (85 aa)).

It belongs to the TRAFAC class TrmE-Era-EngA-EngB-Septin-like GTPase superfamily. EngA (Der) GTPase family. In terms of assembly, associates with the 50S ribosomal subunit.

In terms of biological role, GTPase that plays an essential role in the late steps of ribosome biogenesis. This is GTPase Der from Sulfurihydrogenibium sp. (strain YO3AOP1).